A 790-amino-acid polypeptide reads, in one-letter code: Protein SEY1 (790 aa).

The Cytoplasmic portion of the chain corresponds to 1 to 692; that stretch reads MELSEGELSH…KRSIVQHITQ (692 aa). A GB1/RHD3-type G domain is found at 55–284; it reads GNNYHIISVF…VSNELFKPEY (230 aa). A GTP-binding site is contributed by 65 to 72; that stretch reads GSQSTGKS. The chain crosses the membrane as a helical span at residues 693-713; that stretch reads IPYYIYLIILVLGWNEFMAII. The Lumenal portion of the chain corresponds to 714–716; that stretch reads RNP. Residues 717–737 form a helical membrane-spanning segment; that stretch reads LFFSLSIVLGATVYVLYYLGL. Topologically, residues 738–790 are cytoplasmic; the sequence is LRPALVVAQRTMDEVIVMAKTKLREVLIDDHEVTGRQLNKMAGSKENIELDDM.

The protein belongs to the TRAFAC class dynamin-like GTPase superfamily. GB1/RHD3 GTPase family. RHD3 subfamily.

The protein localises to the endoplasmic reticulum membrane. Its function is as follows. Cooperates with the reticulon proteins and tubule-shaping DP1 family proteins to generate and maintain the structure of the tubular endoplasmic reticulum network. Has GTPase activity, which is required for its function in ER organization. Required for virulence and resistance to cycloheximide. In Candida albicans (strain SC5314 / ATCC MYA-2876) (Yeast), this protein is Protein SEY1.